A 629-amino-acid chain; its full sequence is Polyadenylate-binding protein, cytoplasmic and nuclear (629 aa).

The segment at Met1–Ser47 is disordered. Residues Gly26 to Gln42 are compositionally biased toward basic and acidic residues. RRM domains lie at Ala46 to Arg124, Gly134 to Pro211, Thr227 to Lys304, and Val330 to Arg407. The tract at residues Gly465 to Ala543 is disordered. 2 stretches are compositionally biased toward low complexity: residues Met493–Phe506 and Gly514–Gly531. The 83-residue stretch at Val542–Asn624 folds into the PABC domain.

The protein belongs to the polyadenylate-binding protein type-1 family.

Its subcellular location is the cytoplasm. It localises to the nucleus. In terms of biological role, binds the poly(A) tail of mRNA. Appears to be an important mediator of the multiple roles of the poly(A) tail in mRNA biogenesis, stability and translation. In the nucleus, involved in both mRNA cleavage and polyadenylation. Is also required for efficient mRNA export to the cytoplasm. Acts in concert with a poly(A)-specific nuclease (PAN) to affect poly(A) tail shortening, which may occur concomitantly with either nucleocytoplasmic mRNA transport or translational initiation. In the cytoplasm, stimulates translation initiation and regulates mRNA decay through translation termination-coupled poly(A) shortening, probably mediated by PAN. The protein is Polyadenylate-binding protein, cytoplasmic and nuclear (PAB1) of Yarrowia lipolytica (strain CLIB 122 / E 150) (Yeast).